The chain runs to 917 residues: Translation initiation factor IF-2 (917 aa).

Disordered stretches follow at residues M1–G84 and K150–R318. Residues D10 to L27 show a composition bias toward polar residues. 3 stretches are compositionally biased toward low complexity: residues A69–G84, Q154–A177, and S227–R236. The span at G265–P274 shows a compositional bias: pro residues. Residues G282 to R305 are compositionally biased toward basic and acidic residues. The 171-residue stretch at P416–K586 folds into the tr-type G domain. The interval G425–T432 is G1. Residue G425–T432 coordinates GTP. The segment at G450–H454 is G2. The interval D472–G475 is G3. GTP-binding positions include D472 to H476 and N526 to D529. Residues N526–D529 form a G4 region. Residues S562–L564 are G5.

It belongs to the TRAFAC class translation factor GTPase superfamily. Classic translation factor GTPase family. IF-2 subfamily.

Its subcellular location is the cytoplasm. One of the essential components for the initiation of protein synthesis. Protects formylmethionyl-tRNA from spontaneous hydrolysis and promotes its binding to the 30S ribosomal subunits. Also involved in the hydrolysis of GTP during the formation of the 70S ribosomal complex. The sequence is that of Translation initiation factor IF-2 from Gluconobacter oxydans (strain 621H) (Gluconobacter suboxydans).